We begin with the raw amino-acid sequence, 123 residues long: Small ribosomal subunit protein uS12 (123 aa).

Aspartate 89 carries the post-translational modification 3-methylthioaspartic acid. Residues 101–123 form a disordered region; that stretch reads SLDTSGVKDRKQGRSKYGAKRPK. The span at 113 to 123 shows a compositional bias: basic residues; it reads GRSKYGAKRPK.

This sequence belongs to the universal ribosomal protein uS12 family. Part of the 30S ribosomal subunit. Contacts proteins S8 and S17. May interact with IF1 in the 30S initiation complex.

Its function is as follows. With S4 and S5 plays an important role in translational accuracy. In terms of biological role, interacts with and stabilizes bases of the 16S rRNA that are involved in tRNA selection in the A site and with the mRNA backbone. Located at the interface of the 30S and 50S subunits, it traverses the body of the 30S subunit contacting proteins on the other side and probably holding the rRNA structure together. The combined cluster of proteins S8, S12 and S17 appears to hold together the shoulder and platform of the 30S subunit. The protein is Small ribosomal subunit protein uS12 of Stutzerimonas stutzeri (strain A1501) (Pseudomonas stutzeri).